The primary structure comprises 202 residues: ATP-dependent Clp protease proteolytic subunit (202 aa).

Serine 106 acts as the Nucleophile in catalysis. Residue histidine 131 is part of the active site.

The protein belongs to the peptidase S14 family. Fourteen ClpP subunits assemble into 2 heptameric rings which stack back to back to give a disk-like structure with a central cavity, resembling the structure of eukaryotic proteasomes.

It is found in the cytoplasm. The catalysed reaction is Hydrolysis of proteins to small peptides in the presence of ATP and magnesium. alpha-casein is the usual test substrate. In the absence of ATP, only oligopeptides shorter than five residues are hydrolyzed (such as succinyl-Leu-Tyr-|-NHMec, and Leu-Tyr-Leu-|-Tyr-Trp, in which cleavage of the -Tyr-|-Leu- and -Tyr-|-Trp bonds also occurs).. Its function is as follows. Cleaves peptides in various proteins in a process that requires ATP hydrolysis. Has a chymotrypsin-like activity. Plays a major role in the degradation of misfolded proteins. In Shewanella sp. (strain MR-7), this protein is ATP-dependent Clp protease proteolytic subunit.